The following is a 296-amino-acid chain: Nucleotide-binding protein SSA_0810 (296 aa).

13 to 20 (GMSGAGKT) contributes to the ATP binding site. GTP is bound at residue 63 to 66 (DMRS). The tract at residues 277–296 (WPVNSSHRDKNRRKETVNRS) is disordered. A compositionally biased stretch (basic and acidic residues) spans 282 to 296 (SHRDKNRRKETVNRS).

It belongs to the RapZ-like family.

In terms of biological role, displays ATPase and GTPase activities. The chain is Nucleotide-binding protein SSA_0810 from Streptococcus sanguinis (strain SK36).